The primary structure comprises 561 residues: MSEEDIRAARLEKVEQLKQLGTNPYAYRWESTHHAAQLQEQFADLASGEEVDLEVAIAGRIMARRVFGKLAFFTLQDETGTIQLYLDKNRIQESMADIDADAFNHLKQLTDAGDILGVKGTIKRTEKGELSVYVKQYTILTKSLLPLPDKWHGLTDVAKRYRQRYVDLIVNPEVRQTFRRRAQITAGIRRYLEQRDFLEIETPVLQSEAGGADARPFITHHNTLEMELYLRIATELHLKRLIVGGFEKVFELGRIFRNEGISTRHNPEFTTIEVYQAYADYNDMMALTEGIITTVAQEVLGTLQITYQGEPIDLTPPWRRVTMHDLVKEFTGLDFNSFQTLEEAKTASKNAGIPGVDEAKSIGKLLNLAFEEKVEANLIQPTFVIDYPVEISPLAKPHRSQPGLVERFELFIVGRETGNSFSELTDPIDQRERLEAQAERKAAGDLEAQGVDEDFLTALEYGMPPTGGLGIGIDRLVMLLTDSASIRDVIAFPLLKPEGSVIKQFSYEQKTQTLTIEFDSGSVYEYFKVPPSVKEDLDNAPSKGQHFNKFIKGKFKFEQLS.

Positions 409 and 416 each coordinate Mg(2+).

The protein belongs to the class-II aminoacyl-tRNA synthetase family. In terms of assembly, homodimer. Mg(2+) is required as a cofactor.

It localises to the cytoplasm. The catalysed reaction is tRNA(Lys) + L-lysine + ATP = L-lysyl-tRNA(Lys) + AMP + diphosphate. The sequence is that of Lysine--tRNA ligase from Nostoc punctiforme (strain ATCC 29133 / PCC 73102).